A 247-amino-acid chain; its full sequence is C-type lectin domain family 7 member A (247 aa).

The Cytoplasmic portion of the chain corresponds to 1–44 (MEYHPDLENLDEDGYTQLHFDSQSNTRIAVVSEKGSCAASPPWR). Positions 15–18 (YTQL) match the ITAM-like motif. A helical; Signal-anchor for type II membrane protein membrane pass occupies residues 45–65 (LIAVILGILCLVILVIAVVLG). Over 66 to 247 (TMAIWRSNSG…YSICEKKFSM (182 aa)) the chain is Extracellular. A glycan (N-linked (GlcNAc...) asparagine) is linked at N91. 3 cysteine pairs are disulfide-bonded: C120–C131, C148–C241, and C220–C233. In terms of domain architecture, C-type lectin spans 127–242 (YEKSCYLFSM…CSVPSYSICE (116 aa)). 146-153 (RQCWQLGS) is a (1,3-beta-D-glucosyl)n binding site. Positions 157, 159, and 163 each coordinate a divalent metal cation. A (1,3-beta-D-glucosyl)n-binding site is contributed by E195. E242 contributes to the a divalent metal cation binding site.

As to quaternary structure, homodimer. Interacts with SYK; participates in leukocyte activation in presence of fungal pathogens. Interacts with CD37; this interaction controls CLEC7A-mediated IL-6 production. In terms of assembly, interacts with RANBP9. In terms of processing, phosphorylated on tyrosine residues in response to beta-glucan binding. In terms of tissue distribution, highly expressed in peripheral blood leukocytes and dendritic cells. Detected in spleen, bone marrow, lung, muscle, stomach and placenta.

It localises to the cell membrane. It is found in the cytoplasm. In terms of biological role, lectin that functions as a pattern recognizing receptor (PRR) specific for beta-1,3-linked and beta-1,6-linked glucans, which constitute cell wall constituents from pathogenic bacteria and fungi. Necessary for the TLR2-mediated inflammatory response and activation of NF-kappa-B: upon beta-glucan binding, recruits SYK via its ITAM motif and promotes a signaling cascade that activates some CARD domain-BCL10-MALT1 (CBM) signalosomes, leading to the activation of NF-kappa-B and MAP kinase p38 (MAPK11, MAPK12, MAPK13 and/or MAPK14) pathways which stimulate expression of genes encoding pro-inflammatory cytokines and chemokines. Enhances cytokine production in macrophages and dendritic cells. Mediates production of reactive oxygen species in the cell. Mediates phagocytosis of C.albicans conidia. Binds T-cells in a way that does not involve their surface glycans and plays a role in T-cell activation. Stimulates T-cell proliferation. Induces phosphorylation of SCIMP after binding beta-glucans. The chain is C-type lectin domain family 7 member A from Homo sapiens (Human).